The sequence spans 117 residues: Ribonuclease P protein component (117 aa).

It belongs to the RnpA family. As to quaternary structure, consists of a catalytic RNA component (M1 or rnpB) and a protein subunit.

It carries out the reaction Endonucleolytic cleavage of RNA, removing 5'-extranucleotides from tRNA precursor.. Its function is as follows. RNaseP catalyzes the removal of the 5'-leader sequence from pre-tRNA to produce the mature 5'-terminus. It can also cleave other RNA substrates such as 4.5S RNA. The protein component plays an auxiliary but essential role in vivo by binding to the 5'-leader sequence and broadening the substrate specificity of the ribozyme. The protein is Ribonuclease P protein component of Lactococcus lactis subsp. cremoris (strain MG1363).